A 65-amino-acid polypeptide reads, in one-letter code: Large ribosomal subunit protein bL35 (65 aa).

Positions 1–26 are disordered; that stretch reads MPKMKTNRASAKRFKKTASGGFKAGQ.

The protein belongs to the bacterial ribosomal protein bL35 family.

This is Large ribosomal subunit protein bL35 from Oenococcus oeni (strain ATCC BAA-331 / PSU-1).